Consider the following 392-residue polypeptide: Phosphoglycerate kinase (392 aa).

Substrate contacts are provided by residues 21 to 23 (DFN), Arg36, 59 to 62 (HLGR), Arg113, and Arg146. ATP is bound by residues Lys197, Glu319, and 345–348 (GGDT).

It belongs to the phosphoglycerate kinase family. In terms of assembly, monomer.

It is found in the cytoplasm. It catalyses the reaction (2R)-3-phosphoglycerate + ATP = (2R)-3-phospho-glyceroyl phosphate + ADP. It functions in the pathway carbohydrate degradation; glycolysis; pyruvate from D-glyceraldehyde 3-phosphate: step 2/5. This Francisella tularensis subsp. holarctica (strain FTNF002-00 / FTA) protein is Phosphoglycerate kinase.